A 152-amino-acid polypeptide reads, in one-letter code: Small ribosomal subunit protein uS13 (152 aa).

Belongs to the universal ribosomal protein uS13 family.

It is found in the cytoplasm. In terms of biological role, located at the top of the head of the 40S subunit, it contacts several helices of the 18S rRNA. The chain is Small ribosomal subunit protein uS13 (RPS18) from Branchiostoma belcheri (Amphioxus).